Here is a 1204-residue protein sequence, read N- to C-terminus: E3 ubiquitin-protein ligase DZIP3 (1204 aa).

Disordered stretches follow at residues 1–22 (MDSLAEEFFVSGNPDVEEQTKE) and 640–681 (SIPS…EQVS). Positions 649-658 (SVKDLQEVKS) are enriched in basic and acidic residues. Over residues 659 to 668 (KTKKKKRTKS) the composition is skewed to basic residues. 2 coiled-coil regions span residues 746-861 (KETE…TSRA) and 906-941 (QLKAAVDSWNAIVADVRNKIAFLRTQYNEQINKVKQ). A compositionally biased stretch (basic and acidic residues) spans 1088-1098 (PKKSESEEKSA). The disordered stretch occupies residues 1088–1141 (PKKSESEEKSAQDGNNASPSHTASQPNAPQDPKSAQGSATWEGDKDMDNEEEEE). Residues 1099-1126 (QDGNNASPSHTASQPNAPQDPKSAQGSA) are compositionally biased toward polar residues. Positions 1132-1141 (KDMDNEEEEE) are enriched in acidic residues. The RING-type; atypical zinc finger occupies 1144–1184 (CVICHENLSPENLSVLPCAHKFHSQCIRPWLMQQGTCPTCR).

As to quaternary structure, probably interacts with DAZL.

The protein localises to the cytoplasm. It carries out the reaction S-ubiquitinyl-[E2 ubiquitin-conjugating enzyme]-L-cysteine + [acceptor protein]-L-lysine = [E2 ubiquitin-conjugating enzyme]-L-cysteine + N(6)-ubiquitinyl-[acceptor protein]-L-lysine.. The protein operates within protein modification; protein ubiquitination. Its function is as follows. E3 Ubiquitin ligase proteins mediate ubiquitination and subsequent proteasomal degradation of target proteins. E3 ubiquitin ligases accept ubiquitin from an E2 ubiquitin-conjugating enzyme in the form of a thioester and then directly transfers the ubiquitin to targeted substrates. Able to specifically bind RNA. The protein is E3 ubiquitin-protein ligase DZIP3 (Dzip3) of Mus musculus (Mouse).